We begin with the raw amino-acid sequence, 199 residues long: MARCKS-related protein (199 aa).

The segment at 1 to 199 is disordered; the sequence is MGSQSSKAPR…PTPAGAEQNE (199 aa). Gly2 is lipidated: N-myristoyl glycine. Thr14 bears the Phosphothreonine mark. Residues 16–26 show a composition bias toward low complexity; it reads EEAAGASPAKA. 3 positions are modified to phosphoserine: Ser22, Ser36, and Ser48. The span at 53 to 64 shows a compositional bias: low complexity; the sequence is GTDEAAGATGDA. Ser71 carries the phosphoserine modification. The segment covering 76 to 85 has biased composition (basic and acidic residues); the sequence is AKGDAPPKET. At Thr85 the chain carries Phosphothreonine. Over residues 86–98 the composition is skewed to basic residues; sequence PKKKKKFSFKKPF. An effector domain involved in lipid-binding and calmodulin-binding region spans residues 87-110; it reads KKKKKFSFKKPFKLSGLSFKRNRK. 3 positions are modified to phosphoserine; by PKC: Ser93, Ser101, and Ser104. Residue Ser119 is modified to Phosphoserine. Ser120 is subject to Phosphoserine; by MAPK8. A Phosphoserine modification is found at Ser135. Thr148 carries the phosphothreonine; by MAPK8 modification. Position 151 is a phosphoserine (Ser151). Residues 156 to 167 are compositionally biased toward low complexity; the sequence is AKGAEAGAACKG. At Thr170 the chain carries Phosphothreonine. Residues 181–199 are compositionally biased toward low complexity; it reads STPSGPESGPTPAGAEQNE. A Phosphothreonine; by MAPK8 modification is found at Thr182. Residue Thr191 is modified to Phosphothreonine.

The protein belongs to the MARCKS family. Binds to filamentous actin (F-actin), but not to monomeric G-actin, independently of its phosphorylation status. Interacts with calmodulin. Post-translationally, phosphorylated. Phosphorylation at Ser-120 and Thr-182 is non-redundantly catalyzed by MAPK8 in vivo. Phosphorylation at Thr-148 is preferentially catalyzed by MAPK8 in vivo, but this modification can also be catalyzed by other kinases in the absence of MAPK8. May be phosphorylated by protein kinase C, which disrupts the interaction with calmodulin.

The protein localises to the cytoplasm. It is found in the cytoskeleton. It localises to the cell membrane. Its function is as follows. Controls cell movement by regulating actin cytoskeleton homeostasis and filopodium and lamellipodium formation. When unphosphorylated, induces cell migration. When phosphorylated by MAPK8, induces actin bundles formation and stabilization, thereby reducing actin plasticity, hence restricting cell movement, including neuronal migration. May be involved in coupling the protein kinase C and calmodulin signal transduction systems. In Oryctolagus cuniculus (Rabbit), this protein is MARCKS-related protein (MARCKSL1).